The following is a 627-amino-acid chain: Neutral endopeptidase (627 aa).

The Peptidase M13 domain occupies 1 to 627 (MTRIQDDLFA…RAPENRLKIW (627 aa)). Residue His475 participates in Zn(2+) binding. Glu476 is an active-site residue. Residues His479 and Glu535 each contribute to the Zn(2+) site. Asp539 functions as the Proton donor in the catalytic mechanism.

The protein belongs to the peptidase M13 family. As to quaternary structure, monomer. The cofactor is Zn(2+).

Functionally, endopeptidase with broad substrate specificity for several oligopeptides. The protein is Neutral endopeptidase (pepO) of Lactococcus lactis subsp. lactis (strain IL1403) (Streptococcus lactis).